The sequence spans 365 residues: tRNA-specific 2-thiouridylase MnmA (365 aa).

Residues 14–21 (AMSGGVDS) and leucine 40 contribute to the ATP site. Cysteine 108 serves as the catalytic Nucleophile. Residues cysteine 108 and cysteine 204 are joined by a disulfide bond. Glycine 132 lines the ATP pocket. An interaction with tRNA region spans residues 154-156 (KDQ). The active-site Cysteine persulfide intermediate is the cysteine 204.

This sequence belongs to the MnmA/TRMU family.

The protein localises to the cytoplasm. It catalyses the reaction S-sulfanyl-L-cysteinyl-[protein] + uridine(34) in tRNA + AH2 + ATP = 2-thiouridine(34) in tRNA + L-cysteinyl-[protein] + A + AMP + diphosphate + H(+). Functionally, catalyzes the 2-thiolation of uridine at the wobble position (U34) of tRNA, leading to the formation of s(2)U34. This Rickettsia massiliae (strain Mtu5) protein is tRNA-specific 2-thiouridylase MnmA.